Reading from the N-terminus, the 681-residue chain is Fibulin-1 (681 aa).

Positions 1-17 are cleaved as a signal peptide; sequence MDLYMIVLLSLCGLLRA. Cystine bridges form between Cys29-Cys55, Cys30-Cys62, Cys43-Cys63, Cys72-Cys103, Cys85-Cys104, Cys106-Cys125, Cys107-Cys138, Cys114-Cys139, Cys162-Cys171, Cys167-Cys176, Cys178-Cys191, Cys197-Cys210, Cys204-Cys219, Cys225-Cys237, Cys243-Cys256, Cys250-Cys265, Cys271-Cys283, Cys289-Cys301, Cys317-Cys330, Cys336-Cys348, Cys343-Cys357, Cys359-Cys372, Cys378-Cys390, Cys386-Cys399, Cys401-Cys414, Cys420-Cys429, Cys440-Cys454, Cys460-Cys473, Cys469-Cys482, Cys484-Cys498, Cys504-Cys517, Cys511-Cys526, and Cys531-Cys553. Anaphylatoxin-like domains follow at residues 29 to 63, 68 to 107, and 108 to 139; these read CCED…EQCC, EDSI…CECC, and LLGS…RSCC. Residues 158 to 192 enclose the EGF-like 1 domain; sequence TEDQCRAAGCAQRCLNGTCSCLDGFKLKTDGKHCE. Asn173 carries N-linked (GlcNAc...) asparagine glycosylation. One can recognise an EGF-like 2; calcium-binding domain in the interval 193–238; the sequence is DINECLLGPHHCVTGERCINTLGSYRCQREISCGTGYELTDNNKCK. The 46-residue stretch at 239–284 folds into the EGF-like 3; calcium-binding domain; the sequence is DIDECDLGTHNCAAEMECQNTAGSFRCRPRMQCAAGFIQDALGSCI. Positions 285-331 constitute an EGF-like 4; calcium-binding domain; it reads DINECVSVTALSRGQMCFNTVGSFICQRHSVTCGRGYHLNAEGTRCV. One can recognise an EGF-like 5; calcium-binding domain in the interval 332-373; it reads DIDECAGPDNSCDGHGCINLVGSYRCECRTGFIFNSISRSCE. Residues 374 to 415 form the EGF-like 6; calcium-binding domain; that stretch reads DIDECRNYPGRLCAHKCENILGSYKCSCTAGFKLADDGRNCD. In terms of domain architecture, EGF-like 7; calcium-binding spans 416–455; it reads DVNECESSPCSQGCANVYGSYQSYCRRGYQLSDADGITCE. The EGF-like 8; calcium-binding domain occupies 456–499; that stretch reads DIDECALPTGGHICSYRCHNTPGSFHCTCPASGYTLAANGRSCQ. Residues 500-554 enclose the EGF-like 9; calcium-binding domain; the sequence is DIDECLTGTHSCSESESCFNIQGGFRCLSFDCPANYRRSGDTRPRVDRADIIRCV.

The protein belongs to the fibulin family. Homomultimerizes and interacts with various extracellular matrix components such as FN1, LAMA1, NID, AGC1 and CSPG2.

It is found in the secreted. Its subcellular location is the extracellular space. It localises to the extracellular matrix. Functionally, incorporated into fibronectin-containing matrix fibers. May play a role in cell adhesion and migration along protein fibers within the extracellular matrix (ECM). Could be important for certain developmental processes and contribute to the supramolecular organization of ECM architecture, in particular to those of basement membranes. This is Fibulin-1 (fbln1) from Danio rerio (Zebrafish).